A 489-amino-acid chain; its full sequence is Rhamnulokinase (489 aa).

13-17 (ASSGR) lines the ATP pocket. A disulfide bond links Cys-68 and Cys-222. Substrate-binding positions include Gly-83 and 236–238 (HDT). Asp-237 (proton acceptor) is an active-site residue. Thr-259 contacts ATP. Substrate is bound at residue Asn-296. Position 304 (Gln-304) interacts with ATP. An intrachain disulfide couples Cys-353 to Cys-370. Gly-402 is a binding site for ATP. Cys-413 and Cys-417 form a disulfide bridge.

Belongs to the rhamnulokinase family. Monomer. Mg(2+) serves as cofactor.

The enzyme catalyses L-rhamnulose + ATP = L-rhamnulose 1-phosphate + ADP + H(+). It functions in the pathway carbohydrate degradation; L-rhamnose degradation; glycerone phosphate from L-rhamnose: step 2/3. Involved in the catabolism of L-rhamnose (6-deoxy-L-mannose). Catalyzes the transfer of the gamma-phosphate group from ATP to the 1-hydroxyl group of L-rhamnulose to yield L-rhamnulose 1-phosphate. In Escherichia coli O9:H4 (strain HS), this protein is Rhamnulokinase.